Here is a 279-residue protein sequence, read N- to C-terminus: Elongation factor Ts (279 aa).

Positions 80–83 are involved in Mg(2+) ion dislocation from EF-Tu; that stretch reads TDFV.

It belongs to the EF-Ts family.

The protein localises to the cytoplasm. Functionally, associates with the EF-Tu.GDP complex and induces the exchange of GDP to GTP. It remains bound to the aminoacyl-tRNA.EF-Tu.GTP complex up to the GTP hydrolysis stage on the ribosome. This chain is Elongation factor Ts, found in Borreliella burgdorferi (strain ZS7) (Borrelia burgdorferi).